Reading from the N-terminus, the 887-residue chain is Beta-galactosidase 14 (887 aa).

The first 31 residues, 1-31 (MSKSSRIRMKSRTRYLIAILLVISLCSKASS), serve as a signal peptide directing secretion. Glutamate 197 (proton donor) is an active-site residue. Glutamate 268 acts as the Nucleophile in catalysis. 4 N-linked (GlcNAc...) asparagine glycosylation sites follow: asparagine 269, asparagine 300, asparagine 395, and asparagine 785. Residues 752–838 (KDMRLKAVMR…KTLAVQVKCE (87 aa)) enclose the SUEL-type lectin domain. Residues 838–852 (EKKEGKQDEKKKKED) are compositionally biased toward basic and acidic residues. Positions 838-887 (EKKEGKQDEKKKKEDKDEEEEDDEDDDEEEEEEDKENKDTKDMENKNQDM) are disordered. The span at 853-871 (KDEEEEDDEDDDEEEEEED) shows a compositional bias: acidic residues. Residues 872–887 (KENKDTKDMENKNQDM) are compositionally biased toward basic and acidic residues.

It belongs to the glycosyl hydrolase 35 family.

The protein resides in the secreted. It localises to the extracellular space. Its subcellular location is the apoplast. The catalysed reaction is Hydrolysis of terminal non-reducing beta-D-galactose residues in beta-D-galactosides.. This Arabidopsis thaliana (Mouse-ear cress) protein is Beta-galactosidase 14 (BGAL14).